A 336-amino-acid polypeptide reads, in one-letter code: Flavonoid 6-O-methyltransferase 4 (336 aa).

2 residues coordinate S-adenosyl-L-methionine: Tyr140 and Asp203. His241 functions as the Proton acceptor in the catalytic mechanism.

Belongs to the class I-like SAM-binding methyltransferase superfamily. Cation-independent O-methyltransferase family. Homodimer. Expressed in leaves.

It carries out the reaction ladanein + S-adenosyl-L-methionine = salvigenin + S-adenosyl-L-homocysteine + H(+). The enzyme catalyses scutellarein 7-methyl ether + S-adenosyl-L-methionine = cirsimaritin + S-adenosyl-L-homocysteine + H(+). It participates in flavonoid metabolism. In terms of biological role, flavonoid 6-O-methyltransferase involved in the biosynthesis of polymethoxylated flavonoids natural products such as nevadensin and salvigenin (SALV), aroma compounds which contribute to the flavor of sweet basil, and exhibit pharmacological activities such as anti-allergic, anti-oxidant, antibacterial, anti-proliferative, and anti-inflammatory effects. Catalyzes S-adenosylmethionine-dependent regioselective 6-O-methylation of flavonoids; active on various hydroxylated flavonoid substrates, including scutellarein-7-methyl ether (SCU7Me) and ladanein (LAD). This chain is Flavonoid 6-O-methyltransferase 4, found in Ocimum basilicum (Sweet basil).